The primary structure comprises 756 residues: Subtilisin-like protease SBT3.9 (756 aa).

The first 25 residues, 1-25, serve as a signal peptide directing secretion; it reads MSKTILFLALFLSIVLNVQISFVVA. Positions 26–108 are cleaved as a propeptide — activation peptide; sequence ESKVYVVYLG…VIPNTLYEMT (83 aa). The Inhibitor I9 domain occupies 29–106; that stretch reads VYVVYLGEKE…VQVIPNTLYE (78 aa). One can recognise a Peptidase S8 domain in the interval 112 to 603; that stretch reads TWDYLGVSPG…GGLINPEKAV (492 aa). Catalysis depends on Asp-142, which acts as the Charge relay system. Residues Asn-175 and Asn-202 are each glycosylated (N-linked (GlcNAc...) asparagine). Catalysis depends on His-218, which acts as the Charge relay system. N-linked (GlcNAc...) asparagine glycosylation is found at Asn-233, Asn-357, Asn-395, and Asn-519. Residues 386–460 enclose the PA domain; that stretch reads DCEKLSANPN…ELGTDILFYI (75 aa). The active-site Charge relay system is Ser-534.

This sequence belongs to the peptidase S8 family.

It is found in the secreted. In Arabidopsis thaliana (Mouse-ear cress), this protein is Subtilisin-like protease SBT3.9.